The primary structure comprises 311 residues: Methionyl-tRNA formyltransferase (311 aa).

Residue 109-112 (SLLP) coordinates (6S)-5,6,7,8-tetrahydrofolate.

This sequence belongs to the Fmt family.

It catalyses the reaction L-methionyl-tRNA(fMet) + (6R)-10-formyltetrahydrofolate = N-formyl-L-methionyl-tRNA(fMet) + (6S)-5,6,7,8-tetrahydrofolate + H(+). Attaches a formyl group to the free amino group of methionyl-tRNA(fMet). The formyl group appears to play a dual role in the initiator identity of N-formylmethionyl-tRNA by promoting its recognition by IF2 and preventing the misappropriation of this tRNA by the elongation apparatus. This Staphylococcus aureus (strain MW2) protein is Methionyl-tRNA formyltransferase.